The following is a 1971-amino-acid chain: Germinal-center associated nuclear protein (1971 aa).

Disordered regions lie at residues 1 to 50 (MHPV…KSLA) and 214 to 406 (PAFA…RGKS). Polar residues predominate over residues 8-29 (GGQQPSAFAVSSSTTGTYQTKS). Arg-32 bears the Asymmetric dimethylarginine mark. The interval 33–335 (FGQPSLFGQN…RPRGGTLFGR (303 aa)) is FG-repeats. Polar residues-rich tracts occupy residues 38–50 (LFGQ…KSLA) and 214–224 (PAFASPLSNQN). Low complexity predominate over residues 232–253 (STSAFGSSNSSFSTFPTASPGS). Composition is skewed to basic and acidic residues over residues 288–321 (RKED…DKRP) and 342–359 (KSNK…KESG). Residues 414 to 550 (EEWIYSLGGV…AAGSLLSKSS (137 aa)) are DNA primase. A Phosphoserine modification is found at Ser-424. Residues Lys-483 and Lys-484 each carry the N6-acetyllysine modification. Residues Ser-502, Ser-531, and Ser-550 each carry the phosphoserine modification. In terms of domain architecture, PCI spans 768-951 (NNENMTKCLQ…RKSVFIGRKL (184 aa)). Residues 1124–1162 (HVAAEEVSMERQRLEEEKQRAEEERLKQERELMLTQLSE) adopt a coiled-coil conformation. The interval 1793–1840 (RELQLSHGRSGMRSIHPPTSTFPTPLLHVHQKGKKKEESGREGSLSTE) is disordered.

This sequence belongs to the SAC3 family. In terms of assembly, component of the nuclear pore complex (NPC)-associated TREX-2 complex (transcription and export complex 2), composed of at least GANP, 2 copies of ENY2, PCID2, SEM1/DSS1, and either centrin CETN2 or centrin CETN3. The TREX-2 complex also associates with ALYREF/ALY. Interacts with RNA polymerase II subunit POLR2A and with the transcription elongation factor SUPT5H/SPT5. Interacts (via FG-repeats) with NXF1; this interaction is not mediated by RNA. Interacts with nuclear envelope proteins NUP62, NUP153 and RANBP2/NUP358; interaction with NUP153 is required for full localization at the nuclear pore complex. Interacts with several RNA helicases, including DHX9, DDX21, and DDX39A/DDX39, and with DNA topoisomerase TOP2A. Directly interacts with AICDA/AID. Interacts with the glucocorticoid receptor NR3C1. Interacts with MCM3. In terms of processing, phosphorylation at Ser-502 is induced in B-cells by CD40-stimulation, but not by bacterial lipopolysaccharide (LPS). In terms of tissue distribution, expressed at low levels in lymphoid organs, including thymus, spleen and lymph nodes. Up-regulated in stimulated B-cells in spleen and Peyer's patch germinal centers (at protein level).

The protein resides in the cytoplasm. It localises to the nucleus. Its subcellular location is the nucleus envelope. The protein localises to the nuclear pore complex. It is found in the nucleoplasm. The protein resides in the chromosome. It catalyses the reaction L-lysyl-[histone] + acetyl-CoA = N(6)-acetyl-L-lysyl-[histone] + CoA + H(+). Its function is as follows. As a component of the TREX-2 complex, involved in the export of mRNAs to the cytoplasm through the nuclear pores. Through the acetylation of histones, affects the assembly of nucleosomes at immunoglobulin variable region genes and promotes the recruitment and positioning of transcription complex to favor DNA cytosine deaminase AICDA/AID targeting, hence promoting somatic hypermutations. In Mus musculus (Mouse), this protein is Germinal-center associated nuclear protein (Mcm3ap).